A 184-amino-acid chain; its full sequence is UPF0397 protein SA2477 (184 aa).

5 consecutive transmembrane segments (helical) span residues 11-31 (VVAIGIGAAVFVILGRFVVIP), 44-64 (AFLALISAIFGPFAGLMTGLV), 77-97 (AWWSWVICSGIIGCLYGWIGL), 111-131 (MIYFNIGQIIANIICWALIAP), and 148-168 (QGVISAVLNIISVGIIGTILL).

It belongs to the UPF0397 family.

It localises to the cell membrane. This is UPF0397 protein SA2477 from Staphylococcus aureus (strain N315).